Here is an 81-residue protein sequence, read N- to C-terminus: Adipogenin (81 aa).

A helical transmembrane segment spans residues 16 to 36 (FLASWLCLPVGLLLFLLIVWL).

It belongs to the adipogenin family.

It localises to the membrane. The protein localises to the nucleus. Its function is as follows. Plays a role in stimulating adipocyte differentiation and development. The chain is Adipogenin from Sus scrofa (Pig).